Consider the following 703-residue polypeptide: Collagen alpha-2(VIII) chain (703 aa).

The signal sequence occupies residues 1-28 (MLGTLTPLSSLLLLLLVLVLGCGPRASS). A nonhelical region (NC2) region spans residues 29-76 (GGGAGGAAGYAPVKYIQPMQKGPVGPPFREGKGQYLEMPLPLLPMDLK). The segment at 70–544 (LLPMDLKGEP…AFDETGIAGL (475 aa)) is disordered. The interval 77–536 (GEPGPPGKPG…PGPPGAPGAF (460 aa)) is triple-helical region. A compositionally biased stretch (pro residues) spans 79–97 (PGPPGKPGPRGPPGPPGFP). Over residues 166 to 192 (PSGITIPGKPGAQGVPGPPGFQGEPGP) the composition is skewed to low complexity. Over residues 206-224 (GDNGVGQPGLPGAPGQGGA) the composition is skewed to gly residues. Low complexity-rich tracts occupy residues 265 to 275 (EPGAVGPKGPP) and 285 to 297 (AAGLPGPQGPSGA). A compositionally biased stretch (gly residues) spans 433 to 442 (GRPGGPGVAG). 2 stretches are compositionally biased toward low complexity: residues 444–462 (LGQKGDLGLPGQPGLRGPS) and 476–486 (PQGLPGLKGEP). Over residues 506-532 (TGPPGVPGSPGITGPPGPPGPPGPPGA) the composition is skewed to pro residues. Residues 537 to 703 (DETGIAGLHL…SFSGFLLCPT (167 aa)) are nonhelical region (NC1). The region spanning 570–703 (SAHATPAFTA…SFSGFLLCPT (134 aa)) is the C1q domain.

As to quaternary structure, homotrimers, or heterotrimers in association with alpha 2(VIII) type collagens. Four homotrimers can form a tetrahedron stabilized by central interacting C-terminal NC1 trimers. Post-translationally, proteolytically cleaved by neutrophil elastase, in vitro. In terms of processing, prolines at the third position of the tripeptide repeating unit (G-X-Y) are hydroxylated in some or all of the chains. Expressed primarily in the subendothelium of large blood vessels. Also expressed in arterioles and venules in muscle, heart, kidney, spleen, umbilical cord, liver and lung and is also found in connective tissue layers around hair follicles, around nerve bundles in muscle, in the dura of the optic nerve, in cornea and sclera, and in the perichondrium of cartilaginous tissues. In the kidney, expressed in mesangial cells, glomerular endothelial cells, and tubular epithelial cells. Also expressed in mast cells, and in astrocytes during the repair process. Expressed in Descemet's membrane.

It localises to the secreted. It is found in the extracellular space. The protein resides in the extracellular matrix. Its subcellular location is the basement membrane. Functionally, macromolecular component of the subendothelium. Major component of the Descemet's membrane (basement membrane) of corneal endothelial cells. Also a component of the endothelia of blood vessels. Necessary for migration and proliferation of vascular smooth muscle cells and thus, has a potential role in the maintenance of vessel wall integrity and structure, in particular in atherogenesis. In Homo sapiens (Human), this protein is Collagen alpha-2(VIII) chain (COL8A2).